We begin with the raw amino-acid sequence, 1342 residues long: DNA-directed RNA polymerase subunit beta (1342 aa).

It belongs to the RNA polymerase beta chain family. In terms of assembly, the RNAP catalytic core consists of 2 alpha, 1 beta, 1 beta' and 1 omega subunit. When a sigma factor is associated with the core the holoenzyme is formed, which can initiate transcription.

It catalyses the reaction RNA(n) + a ribonucleoside 5'-triphosphate = RNA(n+1) + diphosphate. DNA-dependent RNA polymerase catalyzes the transcription of DNA into RNA using the four ribonucleoside triphosphates as substrates. This Aliivibrio fischeri (strain MJ11) (Vibrio fischeri) protein is DNA-directed RNA polymerase subunit beta.